The sequence spans 460 residues: Mitochondrial distribution and morphology protein 34 (460 aa).

Residues 1-196 (MSFKFDWESL…LPGIIHRLSQ (196 aa)) form the SMP-LTD domain. The segment covering 304–321 (HNHQAPKRRTIKYKRKSK) has biased composition (basic residues). Disordered regions lie at residues 304-356 (HNHQ…PSRE) and 368-460 (EPSS…AYSG). 2 stretches are compositionally biased toward low complexity: residues 330–355 (STEV…TPSR) and 393–405 (SPPS…DTSL).

Belongs to the MDM34 family. Component of the ER-mitochondria encounter structure (ERMES) or MDM complex, composed of MMM1, MDM10, MDM12 and MDM34.

It is found in the mitochondrion outer membrane. Functionally, component of the ERMES/MDM complex, which serves as a molecular tether to connect the endoplasmic reticulum (ER) and mitochondria. Components of this complex are involved in the control of mitochondrial shape and protein biogenesis, and function in nonvesicular lipid trafficking between the ER and mitochondria. MDM34 is required for the interaction of the ER-resident membrane protein MMM1 and the outer mitochondrial membrane-resident beta-barrel protein MDM10. In Yarrowia lipolytica (strain CLIB 122 / E 150) (Yeast), this protein is Mitochondrial distribution and morphology protein 34.